A 1384-amino-acid chain; its full sequence is MTSYSFTEKKRIRKDFGKQRSILEVPFLLAIQVDSYREFLQENVDPAKRTDHGLHAALKSVFPIASYSGNAALEYVGYKLGEPVFDERECRQRGMSYGAPLRVTVRLVIYDRESSTKAIKYVKEQEVYLGEIPLMTENGTFIVNGTERVIVSQLHRSPGVFFDHDRGKTHSSGKLLYSARIIPYRGSWLDFEFDPKDALFTRIDRRRKLPVSILLRALGYSNEEMLAEFFEINTFHINPDEGVQLELVPERLRGETLGFDLADGDKVIVEAGKRITARHIKQLEASGIAALAVPDDYIVGRILSHDVVDASTGELLAQANDEITDEQLQAFRKAGVDAVGTLWVNDLDRGPYLSNTLRIDPTKTQLEALVEIYRMMRPGEPPTKDAAQNLFHNLFFTFERYDLSAVGRMKFNRRVGRKETTGEAVLYDRKYYGERNDEESKRLVAAHGDSSDILDVIKVLTEIRNGRGVVDDIDHLGNRRVRSVGEMAENVFRVGLVRVERAVKERLSMAESEGLTPQELINAKPVAAAIKEFFGSSQLSQFMDQNNPLSEVTHKRRVSALGPGGLTRERAGFEVRDVHPTHYGRVCTIETPEGPNIGLINSLAVYARTNQYGFLETPYRKVVDGKVYDEVEFLSAIEENEYVIAQANALTNADSVLTEQFVPCRFQGESLLKPPAEVHFMDVSPMQTVSIAAALVPFLEHDDANRALMGANMQRQAVPTLRAQKPLVGTGIERAVARDSGVTVNARRGGEIVQIDAARIVVKVVEEEIVGATDAGVDIYNLVKYTRSNQNTCINQRPLVQVGDIIARGDVLADGPSTDIGELALGQNMLIAFMPWNGYNFEDSILLSERVVEEDRYTTIHIEELTCVARDTKLGPEEISADIPNVSEQALNRLDESGVVYIGAEVRAGDIMVGKVTPKGESQLTPEEKLLRAIFGEKASDVKDSSLRVPPGMDGTVIDVQVFTRDGIEKDKRARQIEESEIKRVKKDFDDQFRILEAAIYMRLRSQIVGKVVNGGAGLKKGDVISDAFLDGLKKADWFALRMKDEDASEAIERAQKQIQAHEKEFERRFADKRGKITAGDDLAPGVLKMVKVFLAVKRRIQPGDKMAGRHGNKGVVSNVVPVEDMPYMASGETVDIVLNPLGVPSRMNIGQILEVHLGWAAKGLGRKIQAMMEAQAAVADLRKFLDDIYNHDDTNVANRVDLSQFSDEELLRLARNLTDGVPMATPVFDGATEAEIKRMLELADLPSSGQTQLYDGRTGEAFDRHTTVGYMHYLKLNHLVDDKMHARSTGPYSLVTQQPLGGKAQFGGQRFGEMEVWALEAYGAAYTLQEMLTVKSDDVQGRNQMYKNIVDGEHEMVAGMPESFNVLVKEIRSLAINMELEDN.

The protein belongs to the RNA polymerase beta chain family. As to quaternary structure, the RNAP catalytic core consists of 2 alpha, 1 beta, 1 beta' and 1 omega subunit. When a sigma factor is associated with the core the holoenzyme is formed, which can initiate transcription.

The enzyme catalyses RNA(n) + a ribonucleoside 5'-triphosphate = RNA(n+1) + diphosphate. Functionally, DNA-dependent RNA polymerase catalyzes the transcription of DNA into RNA using the four ribonucleoside triphosphates as substrates. The polypeptide is DNA-directed RNA polymerase subunit beta (Stenotrophomonas maltophilia (strain R551-3)).